The chain runs to 62 residues: UPF0434 protein Avi_4243 (62 aa).

This sequence belongs to the UPF0434 family.

In Allorhizobium ampelinum (strain ATCC BAA-846 / DSM 112012 / S4) (Agrobacterium vitis (strain S4)), this protein is UPF0434 protein Avi_4243.